Consider the following 422-residue polypeptide: MFSKIKGTYDLMSDKMVCWQKVENHIRTLFAKYHLQEIRTPIIEYRGVFDRAAQHSEMVSKETYTFADKKERFITLRPEGTAGVIRSYVENKLDKTSQLHKFFYYGPCFRYERPQKGRYRQFHQVGVEILGQSNPFLDVEVIALAYETIKSLGICDITVKINSLGCKTTYNNYLQVFKNYLQAHYQQLCPLCQERFEKNILRIWDCKNCNNEPFLKQAPRIFDHLVEDAKVRFLQVLEGLKQMNVNFELCHDLVRGLDYYTHSVFEIVYNNEQGHQAVLGGGGCYDNLVTLFGGNPSPGIGFALGMERLMSILATHSFCNKNILPSLDAFILVSVPQFFYQGLALATTLRHQGFSADLNYQFLSFSKSLKQALKQQPLYLLILGPKEFDNNQITIKNTDTQQQTTILQKDVVSYFQNNKELN.

It belongs to the class-II aminoacyl-tRNA synthetase family. In terms of assembly, homodimer.

The protein localises to the cytoplasm. The catalysed reaction is tRNA(His) + L-histidine + ATP = L-histidyl-tRNA(His) + AMP + diphosphate + H(+). This chain is Histidine--tRNA ligase, found in Onion yellows phytoplasma (strain OY-M).